A 300-amino-acid chain; its full sequence is Putative lysophosphatidic acid:oleoyl-CoA acyltransferase (300 aa).

Residues 32-52 form a helical membrane-spanning segment; sequence WILIVVVMILRVPLCIISVTL. The short motif at 115–120 is the HXXXXD motif element; it reads HSSPLD.

Belongs to the 1-acyl-sn-glycerol-3-phosphate acyltransferase family.

It localises to the lipid droplet. The protein resides in the endoplasmic reticulum membrane. The protein localises to the golgi apparatus membrane. It carries out the reaction a 1-acyl-sn-glycero-3-phosphate + an acyl-CoA = a 1,2-diacyl-sn-glycero-3-phosphate + CoA. Its function is as follows. Acyl-CoA-dependent lysophosphatidic acid acyltransferase with preference for oleoyl-CoA. Involved in triacylglyceride homeostasis and lipid droplet formation. Involved in vacuolar protein sorting. This chain is Putative lysophosphatidic acid:oleoyl-CoA acyltransferase (vps66), found in Schizosaccharomyces pombe (strain 972 / ATCC 24843) (Fission yeast).